A 131-amino-acid chain; its full sequence is mRNA stability protein IGO2 (131 aa).

The segment covering Met-1–Asp-13 has biased composition (polar residues). Residues Met-1–Asp-26 are disordered. Ser-2 is modified (N-acetylserine). Ser-6, Ser-63, Ser-108, and Ser-119 each carry phosphoserine. The disordered stretch occupies residues Val-81–Lys-131. A compositionally biased stretch (low complexity) spans Ser-106–Ser-122.

This sequence belongs to the endosulfine family. Phosphorylated by RIM15.

The protein localises to the cytoplasm. Its subcellular location is the nucleus. In terms of biological role, required for TORC1 to properly control gene expression and chronological life span. Plays an essential role in initiation of the G0 program by preventing the degradation of specific nutrient-regulated mRNAs via the 5'-3' mRNA decay pathway. The sequence is that of mRNA stability protein IGO2 (IGO2) from Saccharomyces cerevisiae (strain ATCC 204508 / S288c) (Baker's yeast).